A 271-amino-acid chain; its full sequence is MNMLSEAAVEKALDKKMNEVSYKMIGKDVSVYYGEKRALYDVNLNVRENTVTALIGPSGCGKSTFLRTLNRMNDTIDGCRVTGKITLDTDDIYDQQIDVVELRARVGMVFQKPNPFPKTIYENIAYGPRIHGLARNKADMDQIVEHSLQKAGLWNEVKDRLLESGTGLSGGQQQRLCIARAVAVSPEVILMDEPCSALDPIATAKVEELIHELRTNYTIVIVTHSMQQAARVSQRTAMFHLGHLVEENETDKMFTNPDDQRTQDYIMGRFG.

Residues 24 to 266 form the ABC transporter domain; it reads MIGKDVSVYY…PDDQRTQDYI (243 aa). 56-63 contacts ATP; that stretch reads GPSGCGKS.

Belongs to the ABC transporter superfamily. Phosphate importer (TC 3.A.1.7) family. In terms of assembly, the complex is composed of two ATP-binding proteins (PstB), two transmembrane proteins (PstC and PstA) and a solute-binding protein (PstS).

It is found in the cell inner membrane. The catalysed reaction is phosphate(out) + ATP + H2O = ADP + 2 phosphate(in) + H(+). Functionally, part of the ABC transporter complex PstSACB involved in phosphate import. Responsible for energy coupling to the transport system. The protein is Phosphate import ATP-binding protein PstB of Agrobacterium fabrum (strain C58 / ATCC 33970) (Agrobacterium tumefaciens (strain C58)).